Consider the following 1372-residue polypeptide: DNA-directed RNA polymerase subunit beta'' (1372 aa).

Zn(2+)-binding residues include C252, C321, C328, and C331.

It belongs to the RNA polymerase beta' chain family. RpoC2 subfamily. In plastids the minimal PEP RNA polymerase catalytic core is composed of four subunits: alpha, beta, beta', and beta''. When a (nuclear-encoded) sigma factor is associated with the core the holoenzyme is formed, which can initiate transcription. It depends on Zn(2+) as a cofactor.

It localises to the plastid. The protein localises to the organellar chromatophore. It catalyses the reaction RNA(n) + a ribonucleoside 5'-triphosphate = RNA(n+1) + diphosphate. Functionally, DNA-dependent RNA polymerase catalyzes the transcription of DNA into RNA using the four ribonucleoside triphosphates as substrates. This is DNA-directed RNA polymerase subunit beta'' from Paulinella chromatophora.